The sequence spans 277 residues: 3-methyl-2-oxobutanoate hydroxymethyltransferase (277 aa).

Positions 54 and 93 each coordinate Mg(2+). 3-methyl-2-oxobutanoate-binding positions include 54-55 (DS), Asp93, and Lys122. Glu124 contacts Mg(2+). Glu191 serves as the catalytic Proton acceptor.

It belongs to the PanB family. Homodecamer; pentamer of dimers. Requires Mg(2+) as cofactor.

The protein resides in the cytoplasm. It catalyses the reaction 3-methyl-2-oxobutanoate + (6R)-5,10-methylene-5,6,7,8-tetrahydrofolate + H2O = 2-dehydropantoate + (6S)-5,6,7,8-tetrahydrofolate. It participates in cofactor biosynthesis; (R)-pantothenate biosynthesis; (R)-pantoate from 3-methyl-2-oxobutanoate: step 1/2. In terms of biological role, catalyzes the reversible reaction in which hydroxymethyl group from 5,10-methylenetetrahydrofolate is transferred onto alpha-ketoisovalerate to form ketopantoate. The protein is 3-methyl-2-oxobutanoate hydroxymethyltransferase of Alkalilimnicola ehrlichii (strain ATCC BAA-1101 / DSM 17681 / MLHE-1).